The following is a 257-amino-acid chain: Hydroxyacylglutathione hydrolase (257 aa).

The Zn(2+) site is built by histidine 54, histidine 56, aspartate 58, histidine 59, histidine 113, aspartate 137, and histidine 175.

The protein belongs to the metallo-beta-lactamase superfamily. Glyoxalase II family. Monomer. Requires Zn(2+) as cofactor.

It catalyses the reaction an S-(2-hydroxyacyl)glutathione + H2O = a 2-hydroxy carboxylate + glutathione + H(+). It functions in the pathway secondary metabolite metabolism; methylglyoxal degradation; (R)-lactate from methylglyoxal: step 2/2. Functionally, thiolesterase that catalyzes the hydrolysis of S-D-lactoyl-glutathione to form glutathione and D-lactic acid. This is Hydroxyacylglutathione hydrolase from Nostoc sp. (strain PCC 7120 / SAG 25.82 / UTEX 2576).